Here is a 66-residue protein sequence, read N- to C-terminus: Photosystem II reaction center protein J (66 aa).

The helical transmembrane segment at 37 to 57 threads the bilayer; sequence LWLVATAGGMAVIFVVGLFFY.

This sequence belongs to the PsbJ family. As to quaternary structure, PSII is composed of 1 copy each of membrane proteins PsbA, PsbB, PsbC, PsbD, PsbE, PsbF, PsbH, PsbI, PsbJ, PsbK, PsbL, PsbM, PsbT, PsbX, PsbY, PsbZ, Psb30/Ycf12, peripheral proteins PsbO, CyanoQ (PsbQ), PsbU, PsbV and a large number of cofactors. It forms dimeric complexes.

The protein resides in the cellular thylakoid membrane. Functionally, one of the components of the core complex of photosystem II (PSII). PSII is a light-driven water:plastoquinone oxidoreductase that uses light energy to abstract electrons from H(2)O, generating O(2) and a proton gradient subsequently used for ATP formation. It consists of a core antenna complex that captures photons, and an electron transfer chain that converts photonic excitation into a charge separation. The sequence is that of Photosystem II reaction center protein J from Synechococcus sp. (strain CC9311).